The sequence spans 543 residues: Hydroxylamine reductase (543 aa).

The [4Fe-4S] cluster site is built by Cys5, Cys8, Cys17, and Cys23. Hybrid [4Fe-2O-2S] cluster-binding residues include His236, Glu260, Cys304, Cys398, Cys426, Cys451, Glu486, and Lys488. Cys398 is modified (cysteine persulfide).

It belongs to the HCP family. [4Fe-4S] cluster is required as a cofactor. It depends on hybrid [4Fe-2O-2S] cluster as a cofactor.

Its subcellular location is the cytoplasm. It carries out the reaction A + NH4(+) + H2O = hydroxylamine + AH2 + H(+). Functionally, catalyzes the reduction of hydroxylamine to form NH(3) and H(2)O. The chain is Hydroxylamine reductase from Bacteroides fragilis (strain ATCC 25285 / DSM 2151 / CCUG 4856 / JCM 11019 / LMG 10263 / NCTC 9343 / Onslow / VPI 2553 / EN-2).